Consider the following 1405-residue polypeptide: Protein crumbs homolog 1 (1405 aa).

Positions 1-27 (MKLKRTAYLLFLYLSSSLLICIKNSFC) are cleaved as a signal peptide. At 28–1339 (NKNNTRCLSG…RCELDLADDR (1312 aa)) the chain is on the extracellular side. The EGF-like 1; atypical domain maps to 30–67 (NNTRCLSGPCQNNSTCKHFPQDNNCCLDTANNLDKDCE). Intrachain disulfides connect C34/C45, C39/C54, C55/C66, C73/C84, C78/C95, C97/C106, C113/C124, C118/C133, C135/C144, C151/C162, C156/C171, C173/C182, C189/C200, C194/C209, C211/C220, C227/C238, C232/C247, C249/C258, C265/C276, C270/C285, C287/C297, C304/C315, C309/C324, C326/C335, C342/C353, C347/C382, C384/C393, C400/C411, C405/C420, C422/C437, C444/C455, C449/C468, and C470/C479. N41 is a glycosylation site (N-linked (GlcNAc...) asparagine). EGF-like domains lie at 69 to 107 (LKDP…LNCE) and 109 to 145 (ATNS…RFCE). The 37-residue stretch at 147–183 (DHNECASSPCHNGAMCQDGINGYSCFCVPGYQGRHCD) folds into the EGF-like 4; calcium-binding domain. Positions 185–221 (EVDECVSDPCKNEAVCLNEIGRYTCVCPQEFSGVNCE) constitute an EGF-like 5; calcium-binding domain. Positions 223–259 (EIDECRSQPCLHGATCQDAPGGYSCDCAPGFLGEHCE) constitute an EGF-like 6; calcium-binding domain. EGF-like domains follow at residues 261–298 (SVNE…MHCE), 300–336 (LIPL…ALCE), 338–394 (DINE…IHCE), 396–438 (DVDE…ENCS), and 440–480 (ILLG…PLCE). Residues 482-669 (VTTLSFGSNG…GLSSNVKAGC (188 aa)) enclose the Laminin G-like 1 domain. Residues N560 and N656 are each glycosylated (N-linked (GlcNAc...) asparagine). Intrachain disulfides connect C641/C669, C675/C686, C680/C695, and C697/C706. An EGF-like 12 domain is found at 671 to 707 (GKDWCESQPCQNRGRCINLWQGYQCECDRPYTGSNCL). The Laminin G-like 2 domain occupies 713-884 (GRFGQDDSTG…PILVNVTQGC (172 aa)). Residues N756 and N879 are each glycosylated (N-linked (GlcNAc...) asparagine). 6 disulfides stabilise this stretch: C850/C884, C890/C901, C895/C910, C912/C921, C927/C938, and C932/C947. 2 EGF-like domains span residues 886–922 (GDNT…RACE) and 923–959 (QVQW…LSRE). In terms of domain architecture, Laminin G-like 3 spans 950–1136 (NAVFSGLSRE…VSTNMVLTGC (187 aa)). N967, N974, and N999 each carry an N-linked (GlcNAc...) asparagine glycan. Intrachain disulfides connect C1095–C1136, C1142–C1153, C1147–C1162, C1164–C1173, C1180–C1190, C1185–C1199, C1201–C1210, C1217–C1228, C1222–C1237, C1239–C1248, C1258–C1273, C1267–C1282, C1284–C1293, C1300–C1311, C1305–C1320, and C1322–C1331. Residues 1138 to 1174 (PSNACHSSPCLHGGNCEDSYSSYRCACLSGWSGTHCE) enclose the EGF-like 15 domain. The region spanning 1176 to 1211 (NIDECFSSPCIHGNCSDGVAAYHCRCEPGYTGVNCE) is the EGF-like 16; calcium-binding domain. N-linked (GlcNAc...) asparagine glycosylation occurs at N1189. EGF-like domains are found at residues 1213–1249 (DVDN…RFCR) and 1254–1294 (PSTV…EWCE). Residues N1242 and N1264 are each glycosylated (N-linked (GlcNAc...) asparagine). One can recognise an EGF-like 19; calcium-binding domain in the interval 1296–1332 (DINECASDPCINGGLCRDLVNRFLCICDVAFAGERCE). Residues 1340–1360 (LLGIFTAVGSGTLALFFILLL) traverse the membrane as a helical segment. Topologically, residues 1361–1405 (AGVASLIASNKRATQGTYSPSGQEKAGPRVEMWIRMPPPALERLI) are cytoplasmic.

It belongs to the Crumbs protein family. Component of a complex composed of PALS1, CRB1 and EPB41L5. Within the complex, interacts (via intracellular domain) with PALS1 and EPB41L5 (via FERM domain). Forms a complex with MPP4 and PALS1. Interacts with MPDZ/MUPP1 and MPP4. In terms of processing, glycosylated. As to expression, expressed in the kidney, lung, stomach and testis. Expressed in the brain. Expressed in the retina of the eye. Expressed in the outer nuclear layer, photoreceptor layer and inner nuclear layer of the retina. Expressed in Mueller cell radial processes in the inner nuclear layer, in apical processes sclerad to the external limiting membrane, and in the subapical region, adjacent to the adherens junction of retinal photoreceptors. In the brain, expressed in the granular layer of the cerebellum, the hippocampal dentate gyrus, the olfactory bulbs, the subventricular region lining the telencephalic ventricles and the rostral migratory stream. Ubiquitously expressed.

Its subcellular location is the apical cell membrane. It is found in the secreted. The protein localises to the cell projection. The protein resides in the cilium. It localises to the photoreceptor outer segment. Its subcellular location is the photoreceptor inner segment. It is found in the cytoplasm. The protein localises to the cell junction. The protein resides in the focal adhesion. Its function is as follows. Plays a role in photoreceptor morphogenesis in the retina. May maintain cell polarization and adhesion. May play a role in epidermal tissue morphogenesis. May function in cell attachment for stratified epithelial organization. The polypeptide is Protein crumbs homolog 1 (Crb1) (Mus musculus (Mouse)).